We begin with the raw amino-acid sequence, 225 residues long: Orotate phosphoribosyltransferase (225 aa).

Lys-29 contributes to the 5-phospho-alpha-D-ribose 1-diphosphate binding site. Orotate is bound at residue 37-38 (FF). Residues 75-76 (YK), Arg-105, Lys-106, Lys-109, His-111, and 130-138 (DDVITAGTS) each bind 5-phospho-alpha-D-ribose 1-diphosphate. Thr-134 and Arg-162 together coordinate orotate.

Belongs to the purine/pyrimidine phosphoribosyltransferase family. PyrE subfamily. As to quaternary structure, homodimer. Requires Mg(2+) as cofactor.

It catalyses the reaction orotidine 5'-phosphate + diphosphate = orotate + 5-phospho-alpha-D-ribose 1-diphosphate. It functions in the pathway pyrimidine metabolism; UMP biosynthesis via de novo pathway; UMP from orotate: step 1/2. Functionally, catalyzes the transfer of a ribosyl phosphate group from 5-phosphoribose 1-diphosphate to orotate, leading to the formation of orotidine monophosphate (OMP). This chain is Orotate phosphoribosyltransferase, found in Bordetella petrii (strain ATCC BAA-461 / DSM 12804 / CCUG 43448).